Consider the following 579-residue polypeptide: 2-succinyl-5-enolpyruvyl-6-hydroxy-3-cyclohexene-1-carboxylate synthase (579 aa).

The protein belongs to the TPP enzyme family. MenD subfamily. As to quaternary structure, homodimer. Mg(2+) serves as cofactor. Mn(2+) is required as a cofactor. It depends on thiamine diphosphate as a cofactor.

The catalysed reaction is isochorismate + 2-oxoglutarate + H(+) = 5-enolpyruvoyl-6-hydroxy-2-succinyl-cyclohex-3-ene-1-carboxylate + CO2. It functions in the pathway quinol/quinone metabolism; 1,4-dihydroxy-2-naphthoate biosynthesis; 1,4-dihydroxy-2-naphthoate from chorismate: step 2/7. The protein operates within quinol/quinone metabolism; menaquinone biosynthesis. In terms of biological role, catalyzes the thiamine diphosphate-dependent decarboxylation of 2-oxoglutarate and the subsequent addition of the resulting succinic semialdehyde-thiamine pyrophosphate anion to isochorismate to yield 2-succinyl-5-enolpyruvyl-6-hydroxy-3-cyclohexene-1-carboxylate (SEPHCHC). In Shewanella frigidimarina (strain NCIMB 400), this protein is 2-succinyl-5-enolpyruvyl-6-hydroxy-3-cyclohexene-1-carboxylate synthase.